We begin with the raw amino-acid sequence, 626 residues long: Phosphomethylpyrimidine synthase (626 aa).

Residues M1–Q22 form a disordered region. A compositionally biased stretch (polar residues) spans L10 to Q22. Substrate contacts are provided by residues N232, M261, Y290, H326, S346–G348, D387–R390, and E426. Residue H430 participates in Zn(2+) binding. Y453 lines the substrate pocket. Zn(2+) is bound at residue H494. Residues C574, C577, and C582 each coordinate [4Fe-4S] cluster.

The protein belongs to the ThiC family. As to quaternary structure, homodimer. [4Fe-4S] cluster is required as a cofactor.

The catalysed reaction is 5-amino-1-(5-phospho-beta-D-ribosyl)imidazole + S-adenosyl-L-methionine = 4-amino-2-methyl-5-(phosphooxymethyl)pyrimidine + CO + 5'-deoxyadenosine + formate + L-methionine + 3 H(+). Its pathway is cofactor biosynthesis; thiamine diphosphate biosynthesis. Functionally, catalyzes the synthesis of the hydroxymethylpyrimidine phosphate (HMP-P) moiety of thiamine from aminoimidazole ribotide (AIR) in a radical S-adenosyl-L-methionine (SAM)-dependent reaction. The chain is Phosphomethylpyrimidine synthase from Pseudomonas putida (strain ATCC 47054 / DSM 6125 / CFBP 8728 / NCIMB 11950 / KT2440).